We begin with the raw amino-acid sequence, 602 residues long: Auxin response factor 18 (602 aa).

The segment at residues 128 to 230 is a DNA-binding region (TF-B3); the sequence is FVKILTASDT…DLRVGVRRLA (103 aa). The interval 359–396 is disordered; the sequence is TSPISTPAQQPQSKCKRSRPIEPSVKTPAPPSFLYSLP. Residues 360–371 are compositionally biased toward polar residues; it reads SPISTPAQQPQS. The PB1 domain occupies 489–581; it reads RSRTKVQMQG…EVKKMTTKLK (93 aa).

The protein belongs to the ARF family. In terms of assembly, homodimers and heterodimers.

The protein resides in the nucleus. Auxin response factors (ARFs) are transcriptional factors that bind specifically to the DNA sequence 5'-TGTCTC-3' found in the auxin-responsive promoter elements (AuxREs). Could act as transcriptional activator or repressor. Formation of heterodimers with Aux/IAA proteins may alter their ability to modulate early auxin response genes expression. The chain is Auxin response factor 18 (ARF18) from Arabidopsis thaliana (Mouse-ear cress).